The chain runs to 378 residues: 3-ketosteroid-9-alpha-monooxygenase, oxygenase component (378 aa).

The 103-residue stretch at 26–128 (WHCIGLAKDF…TMERNGVLFV (103 aa)) folds into the Rieske domain. Residues Cys-67, His-69, Cys-86, and His-89 each contribute to the [2Fe-2S] cluster site. Fe cation-binding residues include Asn-175, His-181, His-186, and Asp-305.

Homotrimer. The two-component system 3-ketosteroid-9-alpha-monooxygenase is composed of an oxygenase component KshA and a reductase component KshB. The cofactor is [2Fe-2S] cluster. Fe cation is required as a cofactor.

The enzyme catalyses androsta-1,4-diene-3,17-dione + 2 reduced [2Fe-2S]-[ferredoxin] + O2 + 2 H(+) = 9alpha-hydroxyandrosta-1,4-diene-3,17-dione + 2 oxidized [2Fe-2S]-[ferredoxin] + H2O. Its activity is regulated as follows. KSH activity is completely inhibited by zinc ions. KshA is specifically inhibited by Fe(3+), Co(2+), Zn(2+) and Ni(2+) ions. In terms of biological role, in vitro, catalyzes the introduction of a 9alpha-hydroxyl moiety into the ring B of 3-ketosteroid substrates such as 1,4-androstadiene-3,17-dione (ADD), 4-androstene-3,17-dione (AD), 4-androstene-17beta-ol-3-one (testosterone), 4-pregnene-3,20-dione (progesterone), 19-nor-4-androstene-3,17-dione (nordion), 1-(5alpha)-androstene-3,17-dione, 5alpha-androstane-3,17-dione and 5beta-androstane-3,17-dione. KSH has the highest activity with 3-keto-delta4 steroid substrates. The chain is 3-ketosteroid-9-alpha-monooxygenase, oxygenase component from Rhodococcus rhodochrous.